The sequence spans 422 residues: L-2-hydroxyglutarate dehydrogenase (422 aa).

It belongs to the L2HGDH family. FAD serves as cofactor.

The protein resides in the cell inner membrane. It carries out the reaction (S)-2-hydroxyglutarate + a quinone = a quinol + 2-oxoglutarate. Its pathway is amino-acid degradation. Functionally, catalyzes the dehydrogenation of L-2-hydroxyglutarate (L2HG) to alpha-ketoglutarate and couples to the respiratory chain by feeding electrons from the reaction into the membrane quinone pool. Functions in a L-lysine degradation pathway that proceeds via cadaverine, glutarate and L-2-hydroxyglutarate. This chain is L-2-hydroxyglutarate dehydrogenase, found in Escherichia coli (strain K12).